A 431-amino-acid chain; its full sequence is Na(+)-translocating NADH-quinone reductase subunit F (431 aa).

A helical transmembrane segment spans residues 10–30 (ISIASLVFCVIGLILSGVILI). One can recognise a 2Fe-2S ferredoxin-type domain in the interval 41-133 (CKLKINNDDS…DMNLEIEERY (93 aa)). The [2Fe-2S] cluster site is built by cysteine 76, cysteine 82, cysteine 85, and cysteine 117. In terms of domain architecture, FAD-binding FR-type spans 136 to 286 (ASSWEGTVVS…SGPYGESFMK (151 aa)).

Belongs to the NqrF family. As to quaternary structure, composed of six subunits; NqrA, NqrB, NqrC, NqrD, NqrE and NqrF. It depends on [2Fe-2S] cluster as a cofactor. FAD serves as cofactor.

The protein resides in the cell inner membrane. The catalysed reaction is a ubiquinone + n Na(+)(in) + NADH + H(+) = a ubiquinol + n Na(+)(out) + NAD(+). Functionally, NQR complex catalyzes the reduction of ubiquinone-1 to ubiquinol by two successive reactions, coupled with the transport of Na(+) ions from the cytoplasm to the periplasm. The first step is catalyzed by NqrF, which accepts electrons from NADH and reduces ubiquinone-1 to ubisemiquinone by a one-electron transfer pathway. This Chlamydia felis (strain Fe/C-56) (Chlamydophila felis) protein is Na(+)-translocating NADH-quinone reductase subunit F.